The primary structure comprises 520 residues: Serine protease Hip1 (520 aa).

Positions Met-1–Gly-30 are cleaved as a signal peptide. Residue Cys-31 is the site of N-palmitoyl cysteine attachment. Cys-31 carries the S-diacylglycerol cysteine lipid modification. The AB hydrolase-1 domain maps to Gly-102–Asp-497. The Nucleophile role is filled by Ser-228. Asp-463 is a catalytic residue. The Proton donor role is filled by His-490.

Belongs to the peptidase S33 family.

It is found in the cell envelope. It localises to the cell membrane. In terms of biological role, serine protease that promotes pathogenesis by promoting the processing and the extracellular release of the M.bovis heat-shock protein GroEL2. Functionally, key immunomodulatory virulence factor, which promotes survival in host macrophages and modulates host immune responses. The chain is Serine protease Hip1 from Mycobacterium bovis (strain ATCC BAA-935 / AF2122/97).